A 442-amino-acid polypeptide reads, in one-letter code: 3-ketoacyl-CoA thiolase (442 aa).

The active-site Acyl-thioester intermediate is the C105. Catalysis depends on proton acceptor residues H398 and C428.

This sequence belongs to the thiolase-like superfamily. Thiolase family. Heterotetramer of two alpha chains (FadJ) and two beta chains (FadI).

Its subcellular location is the cytoplasm. The catalysed reaction is an acyl-CoA + acetyl-CoA = a 3-oxoacyl-CoA + CoA. The protein operates within lipid metabolism; fatty acid beta-oxidation. Functionally, catalyzes the final step of fatty acid oxidation in which acetyl-CoA is released and the CoA ester of a fatty acid two carbons shorter is formed. This chain is 3-ketoacyl-CoA thiolase, found in Aliivibrio fischeri (strain ATCC 700601 / ES114) (Vibrio fischeri).